The following is a 211-amino-acid chain: Ribosomal RNA small subunit methyltransferase G (211 aa).

Residues glycine 73, 126–127 (IE), and arginine 142 contribute to the S-adenosyl-L-methionine site.

This sequence belongs to the methyltransferase superfamily. RNA methyltransferase RsmG family.

It is found in the cytoplasm. The enzyme catalyses guanosine(527) in 16S rRNA + S-adenosyl-L-methionine = N(7)-methylguanosine(527) in 16S rRNA + S-adenosyl-L-homocysteine. Functionally, specifically methylates the N7 position of guanine in position 527 of 16S rRNA. This Methylorubrum populi (strain ATCC BAA-705 / NCIMB 13946 / BJ001) (Methylobacterium populi) protein is Ribosomal RNA small subunit methyltransferase G.